Reading from the N-terminus, the 359-residue chain is Phospho-N-acetylmuramoyl-pentapeptide-transferase (359 aa).

10 helical membrane passes run 3-23 (QILI…PVLI), 55-75 (VAIL…GLAL), 84-104 (GLLV…DDLI), 120-140 (TVGI…FGNA), 156-176 (IATV…LVSA), 187-207 (LDGL…LITF), 231-251 (LALV…WNAA), 255-275 (IFMG…LSVT), 280-300 (ILAV…VVQI), and 334-354 (FWLL…GEWL).

This sequence belongs to the glycosyltransferase 4 family. MraY subfamily. Mg(2+) is required as a cofactor.

It localises to the cell membrane. It catalyses the reaction UDP-N-acetyl-alpha-D-muramoyl-L-alanyl-gamma-D-glutamyl-meso-2,6-diaminopimeloyl-D-alanyl-D-alanine + di-trans,octa-cis-undecaprenyl phosphate = di-trans,octa-cis-undecaprenyl diphospho-N-acetyl-alpha-D-muramoyl-L-alanyl-D-glutamyl-meso-2,6-diaminopimeloyl-D-alanyl-D-alanine + UMP. The protein operates within cell wall biogenesis; peptidoglycan biosynthesis. Catalyzes the initial step of the lipid cycle reactions in the biosynthesis of the cell wall peptidoglycan: transfers peptidoglycan precursor phospho-MurNAc-pentapeptide from UDP-MurNAc-pentapeptide onto the lipid carrier undecaprenyl phosphate, yielding undecaprenyl-pyrophosphoryl-MurNAc-pentapeptide, known as lipid I. In Mycobacterium sp. (strain MCS), this protein is Phospho-N-acetylmuramoyl-pentapeptide-transferase.